Reading from the N-terminus, the 513-residue chain is ATP synthase subunit alpha (513 aa).

169–176 (GDRQTGKT) is an ATP binding site.

The protein belongs to the ATPase alpha/beta chains family. In terms of assembly, F-type ATPases have 2 components, CF(1) - the catalytic core - and CF(0) - the membrane proton channel. CF(1) has five subunits: alpha(3), beta(3), gamma(1), delta(1), epsilon(1). CF(0) has three main subunits: a(1), b(2) and c(9-12). The alpha and beta chains form an alternating ring which encloses part of the gamma chain. CF(1) is attached to CF(0) by a central stalk formed by the gamma and epsilon chains, while a peripheral stalk is formed by the delta and b chains.

Its subcellular location is the cell inner membrane. It carries out the reaction ATP + H2O + 4 H(+)(in) = ADP + phosphate + 5 H(+)(out). Functionally, produces ATP from ADP in the presence of a proton gradient across the membrane. The alpha chain is a regulatory subunit. The protein is ATP synthase subunit alpha of Bordetella petrii (strain ATCC BAA-461 / DSM 12804 / CCUG 43448).